A 252-amino-acid polypeptide reads, in one-letter code: Triosephosphate isomerase (252 aa).

Residue 9–11 (NWK) participates in substrate binding. Histidine 95 serves as the catalytic Electrophile. Catalysis depends on glutamate 167, which acts as the Proton acceptor. Residues glycine 173, serine 211, and 232 to 233 (GG) contribute to the substrate site.

It belongs to the triosephosphate isomerase family. Homodimer.

It localises to the cytoplasm. It carries out the reaction D-glyceraldehyde 3-phosphate = dihydroxyacetone phosphate. It participates in carbohydrate biosynthesis; gluconeogenesis. It functions in the pathway carbohydrate degradation; glycolysis; D-glyceraldehyde 3-phosphate from glycerone phosphate: step 1/1. Its function is as follows. Involved in the gluconeogenesis. Catalyzes stereospecifically the conversion of dihydroxyacetone phosphate (DHAP) to D-glyceraldehyde-3-phosphate (G3P). The polypeptide is Triosephosphate isomerase (Marinobacter nauticus (strain ATCC 700491 / DSM 11845 / VT8) (Marinobacter aquaeolei)).